A 100-amino-acid polypeptide reads, in one-letter code: uncharacterized protein (100 aa).

Transmembrane regions (helical) follow at residues 11 to 33 (VWSILFVTGIVTACLFAGVSVLM), 45 to 64 (WMLAGLIVLGVFAIWYSLVY), and 68 to 90 (WEGAALGMLGFNVIFGAIAGYLI).

The protein localises to the cell membrane. This is an uncharacterized protein from Bacillus subtilis (strain 168).